Here is a 633-residue protein sequence, read N- to C-terminus: Shootin-1 (633 aa).

M1 carries the N-acetylmethionine modification. Residues S3 and S4 each carry the phosphoserine modification. Residues 7–353 (EKQLQLITSL…RVNQSENSVP (347 aa)) adopt a coiled-coil conformation. Phosphoserine; by PAK1 occurs at positions 101 and 249. Residues 343 to 508 (KRVNQSENSV…LATSESKSMP (166 aa)) form a disordered region. A compositionally biased stretch (pro residues) spans 352-369 (VPPPPPPPPPLPPPPPNP). S375 is subject to Phosphoserine. The segment covering 403-418 (TDLKRQAVEEMMDRIK) has biased composition (basic and acidic residues). The span at 456–465 (LNKSTSSRSL) shows a compositional bias: polar residues. S473 is modified (phosphoserine). Position 487 is a phosphothreonine (T487). The segment covering 490-505 (ADSSSPTGILATSESK) has biased composition (polar residues). S494 carries the post-translational modification Phosphoserine. T496 carries the phosphothreonine modification. Phosphoserine is present on residues S506 and S515. Positions 525-633 (TLEAEFNNPC…KTGETDSSNC (109 aa)) are disordered. The residue at position 537 (T537) is a Phosphothreonine. Residues 550–559 (CTNSKVTFQP) show a composition bias toward polar residues. Residues 590–621 (PQTKDQAAEKDPTQCKEEERGETQPEFKEDSS) show a composition bias toward basic and acidic residues.

It belongs to the shootin family. As to quaternary structure, interacts with PFN2. Interacts (via N-terminus) with KIF20B; this interaction is direct and promotes the association of SHTN1 to microtubules in primary neurons. Associates with microtubule. Interacts with L1CAM; this interaction occurs in axonal growth cones. Interacts with actin filament retrograde flow; this interaction is enhanced in a netrin-1- and PAK1-dependent manner and promotes F-actin-substrate coupling and concomitant formation of traction forces at axonal growth cones. Interacts with RUFY3. In terms of processing, phosphorylated on Ser-101 and Ser-249 by PAK1 through a CDC42- and RAC1-dependent signaling pathway, which enhances its association with F-actin retrograde flow in filopodia and lamellipodia of axonal growth cones. Phosphorylation on Ser-101 and Ser-249 is increased by netrin-1. In terms of tissue distribution, brain-specific (at protein level). Expressed in hippocampal neurons.

The protein localises to the perikaryon. The protein resides in the cell projection. Its subcellular location is the axon. It is found in the growth cone. It localises to the cytoplasm. The protein localises to the cytoskeleton. The protein resides in the filopodium. Its subcellular location is the lamellipodium. In terms of biological role, involved in the generation of internal asymmetric signals required for neuronal polarization and neurite outgrowth. Mediates netrin-1-induced F-actin-substrate coupling or 'clutch engagement' within the axon growth cone through activation of CDC42, RAC1 and PAK1-dependent signaling pathway, thereby converting the F-actin retrograde flow into traction forces, concomitantly with filopodium extension and axon outgrowth. Plays a role in cytoskeletal organization by regulating the subcellular localization of phosphoinositide 3-kinase (PI3K) activity at the axonal growth cone. Also plays a role in regenerative neurite outgrowth. In the developing cortex, cooperates with KIF20B to promote both the transition from the multipolar to the bipolar stage and the radial migration of cortical neurons from the ventricular zone toward the superficial layer of the neocortex. Involved in the accumulation of phosphatidylinositol 3,4,5-trisphosphate (PIP3) in the growth cone of primary hippocampal neurons. The sequence is that of Shootin-1 from Rattus norvegicus (Rat).